The chain runs to 335 residues: tRNA N6-adenosine threonylcarbamoyltransferase (335 aa).

Fe cation contacts are provided by H111 and H115. Substrate is bound by residues 133 to 137, D166, G179, D183, and N268; that span reads IISGG. D296 serves as a coordination point for Fe cation.

It belongs to the KAE1 / TsaD family. It depends on Fe(2+) as a cofactor.

The protein resides in the cytoplasm. It carries out the reaction L-threonylcarbamoyladenylate + adenosine(37) in tRNA = N(6)-L-threonylcarbamoyladenosine(37) in tRNA + AMP + H(+). Functionally, required for the formation of a threonylcarbamoyl group on adenosine at position 37 (t(6)A37) in tRNAs that read codons beginning with adenine. Is involved in the transfer of the threonylcarbamoyl moiety of threonylcarbamoyl-AMP (TC-AMP) to the N6 group of A37, together with TsaE and TsaB. TsaD likely plays a direct catalytic role in this reaction. This is tRNA N6-adenosine threonylcarbamoyltransferase from Aquifex aeolicus (strain VF5).